Consider the following 530-residue polypeptide: uncharacterized protein (530 aa).

The segment at 362–408 (NLTPKLNKTNEDIKSDSTSQPQGFPEGNRRVMENPETKVSKTDDEEM) is disordered. A compositionally biased stretch (basic and acidic residues) spans 388-403 (GNRRVMENPETKVSKT).

It belongs to the IIV-6 030L family.

This is an uncharacterized protein from Invertebrate iridescent virus 6 (IIV-6).